The sequence spans 468 residues: ATP synthase subunit beta (468 aa).

155–162 lines the ATP pocket; sequence GGAGVGKT.

The protein belongs to the ATPase alpha/beta chains family. As to quaternary structure, F-type ATPases have 2 components, CF(1) - the catalytic core - and CF(0) - the membrane proton channel. CF(1) has five subunits: alpha(3), beta(3), gamma(1), delta(1), epsilon(1). CF(0) has three main subunits: a(1), b(2) and c(9-12). The alpha and beta chains form an alternating ring which encloses part of the gamma chain. CF(1) is attached to CF(0) by a central stalk formed by the gamma and epsilon chains, while a peripheral stalk is formed by the delta and b chains.

It localises to the cell membrane. It carries out the reaction ATP + H2O + 4 H(+)(in) = ADP + phosphate + 5 H(+)(out). Functionally, produces ATP from ADP in the presence of a proton gradient across the membrane. The catalytic sites are hosted primarily by the beta subunits. The chain is ATP synthase subunit beta from Bacillus cereus (strain B4264).